A 550-amino-acid chain; its full sequence is Mycosin-2 (550 aa).

Positions 1 to 33 (MASPLNRPGLRAAAASAALTLVALSANVPAAQA) are cleaved as a signal peptide. Positions 34 to 62 (IPPPSVDPAMVPADARPGPDQPMRRSNSC) are disordered. A Peptidase S8 domain is found at 79-490 (GFNLVNISKA…YGLVDPVAAL (412 aa)). Active-site charge relay system residues include aspartate 103 and histidine 133. A compositionally biased stretch (pro residues) spans 168-190 (PPVTAAPAPPVEVPPPMPPPPPV). Residues 168-236 (PPVTAAPAPP…PPPPPGAPDG (69 aa)) form a disordered region. Serine 435 serves as the catalytic Charge relay system. A helical transmembrane segment spans residues 524 to 544 (NIAIGFVGAVATGVLAMAIGA).

It belongs to the peptidase S8 family.

The protein resides in the cell membrane. This Mycobacterium tuberculosis (strain ATCC 25618 / H37Rv) protein is Mycosin-2.